We begin with the raw amino-acid sequence, 164 residues long: Pheromone-binding protein 2 (164 aa).

Positions 1 to 22 are cleaved as a signal peptide; sequence MIRKVLLSVLLAVLMTINLGQA. 3 disulfide bridges follow: Cys41/Cys76, Cys72/Cys130, and Cys119/Cys139.

This sequence belongs to the PBP/GOBP family. As to expression, antenna.

This major soluble protein in olfactory sensilla of male moths might serve to solubilize the extremely hydrophobic pheromone molecules and to transport pheromone through the aqueous lymph to receptors located on olfactory cilia. The protein is Pheromone-binding protein 2 of Antheraea pernyi (Chinese oak silk moth).